The sequence spans 1055 residues: Bifunctional fucokinase/GDP-fucose pyrophosphorylase (1055 aa).

The interval 34–565 (WDAIVLTAAS…SSQRVSLEEL (532 aa)) is GDP-fucose pyrophosphorylase. Residues 693–1055 (GKSHSENHIS…VKVYNWSICI (363 aa)) form an L-fucokinase region. 826–836 (PRGSGLGTSSI) contributes to the ATP binding site.

Belongs to the GHMP kinase family. Mn(2+) is required as a cofactor. The cofactor is Mg(2+). Ubiquitous. Highest expression in flower buds.

The enzyme catalyses L-fucose + ATP = beta-L-fucose 1-phosphate + ADP + H(+). It carries out the reaction beta-L-fucose 1-phosphate + GTP + H(+) = GDP-beta-L-fucose + diphosphate. Its function is as follows. Bifunctional enzyme involved in the salvage pathway which converts free L-fucose to GDP-L-fucose. Catalyzes two successive reactions, the ATP-dependent phosphorylation of L-fucose to L-fucose 1-phosphate, and its guanylylation to GDP-L-fucose. The sugar-1-kinase activity has a strict substrate specificity for L-fucose and ATP. The pyrophosphorylase activity has a strict substrate specificity for L-fucose 1-phosphate and GTP. The chain is Bifunctional fucokinase/GDP-fucose pyrophosphorylase (FKGP) from Arabidopsis thaliana (Mouse-ear cress).